The chain runs to 520 residues: Cytochrome P450 6d3 (520 aa).

Cys461 serves as a coordination point for heme.

It belongs to the cytochrome P450 family. Heme is required as a cofactor.

Its subcellular location is the endoplasmic reticulum membrane. It is found in the microsome membrane. Its function is as follows. Metabolizes pyrethroid insecticides and other xenobiotics. This Musca domestica (House fly) protein is Cytochrome P450 6d3 (CYP6D3).